Reading from the N-terminus, the 534-residue chain is MKQEGSARRRGADKAKPPPGGGEQEPPPPPAPQDVEMKEEAAAGGGSTGETAGKTAAAAAEHSQRELDTVTLEDIKEHVKQLEKAVSGKEPRFVLRALRMLPSTSRRLNHYVLYKAVHGFFTSNNATRDFLLPFLEEPMDTEADLQFRPRTGKAASAPLLPEVEAYLQLLMVIFLMNSKRYKEAQKISDDLMQKISTQNRRALDLVAAKCYYYHARVYEFLDKLDVVRSFLHARLRTATLRHDTDGQATLLNLLLRNYLHYSLYDQAEKLVSKSVFPEQANNNEWARYLYYTGRIKAIQLEYSEARRTMTNALRKAPQHTAVGFKQTVHKLLIVVELLLGEIPDRLQFRQPSLKRSLMPYFLLTQAVRTGNLAKFNQVLDQFGEKFQADGTYTLIIRLRHNVIKTGVRMISLSYSRISLADIAQKLQLDSPEDAEFIVAKAIRDGVIEASINHEKGYVQSKEMIDIYSTREPQLAFHQRISFCLDIHNMSVKAMRFPPKSYNKDLESAEERREREQQDLEFAKEMAEDDDDSFP.

Over residues 1–16 the composition is skewed to basic and acidic residues; it reads MKQEGSARRRGADKAK. Residues 1 to 68 form a disordered region; that stretch reads MKQEGSARRR…AAEHSQRELD (68 aa). A compositionally biased stretch (pro residues) spans 17 to 32; it reads PPPGGGEQEPPPPPAP. K38 participates in a covalent cross-link: Glycyl lysine isopeptide (Lys-Gly) (interchain with G-Cter in SUMO1); alternate. Residue K38 forms a Glycyl lysine isopeptide (Lys-Gly) (interchain with G-Cter in SUMO2); alternate linkage. Low complexity predominate over residues 49–61; it reads GETAGKTAAAAAE. One can recognise a PCI domain in the interval 286-465; that stretch reads ARYLYYTGRI…GYVQSKEMID (180 aa). Phosphoserine is present on residues S418 and S430. The disordered stretch occupies residues 500–534; that stretch reads SYNKDLESAEERREREQQDLEFAKEMAEDDDDSFP. Residues 501 to 525 show a composition bias toward basic and acidic residues; the sequence is YNKDLESAEERREREQQDLEFAKEM.

It belongs to the proteasome subunit S3 family. Component of the 19S proteasome regulatory particle complex. The 26S proteasome consists of a 20S core particle (CP) and two 19S regulatory subunits (RP). The regulatory particle is made of a lid composed of 9 subunits including PSMD3, a base containing 6 ATPases and few additional components. Interacts with UBQLN1 (via ubiquitin-like domain). Interacts with ERCC6.

Functionally, component of the 26S proteasome, a multiprotein complex involved in the ATP-dependent degradation of ubiquitinated proteins. This complex plays a key role in the maintenance of protein homeostasis by removing misfolded or damaged proteins, which could impair cellular functions, and by removing proteins whose functions are no longer required. Therefore, the proteasome participates in numerous cellular processes, including cell cycle progression, apoptosis, or DNA damage repair. The sequence is that of 26S proteasome non-ATPase regulatory subunit 3 (PSMD3) from Bos taurus (Bovine).